A 310-amino-acid polypeptide reads, in one-letter code: Haloalkane dehalogenase (310 aa).

An AB hydrolase-1 domain is found at 49–295 (VFLCLHGEPT…DAGHFVQEFG (247 aa)). The active-site Nucleophile is the D124. Chloride contacts are provided by W125 and W175. D260 acts as the Proton donor in catalysis. Catalysis depends on H289, which acts as the Proton acceptor.

The protein belongs to the haloalkane dehalogenase family. Type 1 subfamily. In terms of assembly, monomer.

It carries out the reaction 1-haloalkane + H2O = a halide anion + a primary alcohol + H(+). It catalyses the reaction 1,2-dichloroethane + H2O = 2-chloroethanol + chloride + H(+). It participates in xenobiotic degradation; 1,2-dichloroethane degradation; glycolate from 1,2-dichloroethane: step 1/4. Inhibited by thiol reagents such as p-chloromercuribenzoate and iodoacetamide. Its function is as follows. Catalyzes hydrolytic cleavage of carbon-halogen bonds in halogenated aliphatic compounds, leading to the formation of the corresponding primary alcohols, halide ions and protons. Has a broad substrate specificity, which includes terminally mono- and di- chlorinated and brominated alkanes (up to C4 only). The highest activity was found with 1,2-dichloroethane, 1,3-dichloropropane, and 1,2-dibromoethane. The polypeptide is Haloalkane dehalogenase (dhlA) (Xanthobacter autotrophicus).